Consider the following 460-residue polypeptide: MVTFTSEASRSRSKKVCVIGAGPAGLVSARELRKEGHKVVVLEQNEDVGGQWFYQPNVEEEDPLGRSSGSINGELKVHSSIYSSLRLTSPREIMGYSDFPFLAKKGRDMRRFPGHKELWLYLKDFSEAFGLREMIRFNVRVEFVGEKEEEDDVKKWIVRSREKFSGKVMEEIFDAVVVATGHYSHPRLPSIKGMDSWKRKQIHSHVYRVPDPFRNEVVVVVGNSMSGQDISMELVEVAKEVHLSAKTLDISSGLSKVISKHPNLLIHPQIESLEDDGKVIFVDGSWVVADTILYCTGYSYKFPFLESKGRIEVDDDRVGPLFEHTFPPCLSPSLSFVGIPRKLIGFPFFEAQAKWIAQVLSGKSSLPSPDQMLQSVDEFYRSRDLAGVPKHNTHDIADFTYCDKYADYVGFPHLEDWRKLLCLSALNNSQENLETYRDSWDDHELLQEALQSSHFTNFNS.

20-25 (GAGPAG) contacts FAD. Position 222–227 (222–227 (GNSMSG)) interacts with NADP(+).

Belongs to the FMO family. FAD serves as cofactor.

In terms of biological role, catalyzes the conversion of methylthioalkyl glucosinolates of any chain length into methylsulfinylalkyl glucosinolates. This is Flavin-containing monooxygenase FMO GS-OX-like 9 from Arabidopsis thaliana (Mouse-ear cress).